The primary structure comprises 359 residues: MLENRVKTKQIFIGGVAIGGDAPISTQSMTFSKTADIESTKNQIDRFKLAGADLVRVAVSNEKDALALKELKKVSPLPLIADIHFHYKFALIAAQSVDAIRINPGNIGSKDKIKAVVDACKEKNIPIRIGVNAGSLEKQFDQKYGPTPKGMVESALYNAKLLEDLDFTDFKISLKASDVVRTIEAYRMLRPLVIYPFHLGVTEAGNLFSSSIKSAMALGGLLMEGIGDTMRVSITGELENEIKVARAILRHSGRLKEGINWISCPTCGRIEANLVDMASKVEKRLSHIKTPLDISVMGCVVNALGEAKHADMAIAFGNRSGLIIKEGKVIHKLAEKDLFETFVIEVENLAKEREKSLKD.

[4Fe-4S] cluster contacts are provided by C264, C267, C299, and E306.

Belongs to the IspG family. The cofactor is [4Fe-4S] cluster.

It carries out the reaction (2E)-4-hydroxy-3-methylbut-2-enyl diphosphate + oxidized [flavodoxin] + H2O + 2 H(+) = 2-C-methyl-D-erythritol 2,4-cyclic diphosphate + reduced [flavodoxin]. It functions in the pathway isoprenoid biosynthesis; isopentenyl diphosphate biosynthesis via DXP pathway; isopentenyl diphosphate from 1-deoxy-D-xylulose 5-phosphate: step 5/6. Functionally, converts 2C-methyl-D-erythritol 2,4-cyclodiphosphate (ME-2,4cPP) into 1-hydroxy-2-methyl-2-(E)-butenyl 4-diphosphate. The polypeptide is 4-hydroxy-3-methylbut-2-en-1-yl diphosphate synthase (flavodoxin) (Helicobacter pylori (strain J99 / ATCC 700824) (Campylobacter pylori J99)).